We begin with the raw amino-acid sequence, 611 residues long: Aspartate--tRNA(Asp/Asn) ligase (611 aa).

Glu177 serves as a coordination point for L-aspartate. The aspartate stretch occupies residues 201 to 204 (QLFK). Arg223 contributes to the L-aspartate binding site. ATP is bound by residues 223 to 225 (RDE) and Gln232. Residue His461 coordinates L-aspartate. Glu499 lines the ATP pocket. An L-aspartate-binding site is contributed by Arg506. 551-554 (GVDR) serves as a coordination point for ATP.

It belongs to the class-II aminoacyl-tRNA synthetase family. Type 1 subfamily. In terms of assembly, homodimer.

The protein resides in the cytoplasm. The enzyme catalyses tRNA(Asx) + L-aspartate + ATP = L-aspartyl-tRNA(Asx) + AMP + diphosphate. In terms of biological role, aspartyl-tRNA synthetase with relaxed tRNA specificity since it is able to aspartylate not only its cognate tRNA(Asp) but also tRNA(Asn). Reaction proceeds in two steps: L-aspartate is first activated by ATP to form Asp-AMP and then transferred to the acceptor end of tRNA(Asp/Asn). The protein is Aspartate--tRNA(Asp/Asn) ligase of Synechococcus sp. (strain WH7803).